A 109-amino-acid chain; its full sequence is Phosphoribosyl-AMP cyclohydrolase (109 aa).

A Mg(2+)-binding site is contributed by aspartate 76. Zn(2+) is bound at residue cysteine 77. Residues aspartate 78 and aspartate 80 each coordinate Mg(2+). Residues cysteine 93 and cysteine 100 each coordinate Zn(2+).

Belongs to the PRA-CH family. Homodimer. Mg(2+) is required as a cofactor. The cofactor is Zn(2+).

The protein localises to the cytoplasm. It catalyses the reaction 1-(5-phospho-beta-D-ribosyl)-5'-AMP + H2O = 1-(5-phospho-beta-D-ribosyl)-5-[(5-phospho-beta-D-ribosylamino)methylideneamino]imidazole-4-carboxamide. Its pathway is amino-acid biosynthesis; L-histidine biosynthesis; L-histidine from 5-phospho-alpha-D-ribose 1-diphosphate: step 3/9. Catalyzes the hydrolysis of the adenine ring of phosphoribosyl-AMP. The sequence is that of Phosphoribosyl-AMP cyclohydrolase from Streptococcus mutans serotype c (strain ATCC 700610 / UA159).